The primary structure comprises 104 residues: ESAT-6-like protein (104 aa).

A coiled-coil region spans residues 12-43 (MAQAAQDIEQSANAIRGMQNQLASAKDQLRSH).

It belongs to the WXG100 family. CFP-10 subfamily. In isolation forms a homodimer. Forms a tight 1:1 complex with EsxA. Forms a complex with EsxA and EccC, probably wholly mediated by EsxB; binds in a pocket in the third FtsK (ATPase) domain of EccC (residues 1163-1208).

The protein localises to the secreted. In terms of biological role, may help regulate assembly and function of the type VII secretion system (T7SS). Binds to EccC and induces its multimerization. May serve as a chaperone for EsxA. This chain is ESAT-6-like protein, found in Thermomonospora curvata (strain ATCC 19995 / DSM 43183 / JCM 3096 / KCTC 9072 / NBRC 15933 / NCIMB 10081 / Henssen B9).